The chain runs to 734 residues: Photosystem I P700 chlorophyll a apoprotein A2 (734 aa).

Helical transmembrane passes span 46-69, 135-158, 175-199, 273-291, 330-353, 369-395, 417-439, and 517-535; these read IFASHFGQLAIIFLWTSGNLFHVA, LYTGALFLLFISAISLIAGWLHLQ, LNHHLSGLFGVSSLAWTGHLVHVAI, MAHHHLAIAFIFLIAGHMY, IHFQLGLALASLGVITSLVAQHMY, AALYTHHQYIAGFIMTGAFAHGAIFFI, AIISHLSWASLFLGFHTLGLYVH, and FLVHHAIALGLHTTTLILV. [4Fe-4S] cluster contacts are provided by C559 and C568. The next 2 membrane-spanning stretches (helical) occupy residues 575 to 596 and 643 to 665; these read AFYLAVFWMLNTIGWVTFYWHW and LSVWAWMFLFGHLVWATGFMFLI. Chlorophyll a is bound by residues H654, M662, and Y670. W671 is a phylloquinone binding site. The helical transmembrane segment at 707–727 threads the bilayer; it reads LVGLAHFSVGYIFTYAAFLIA.

It belongs to the PsaA/PsaB family. In terms of assembly, the PsaA/B heterodimer binds the P700 chlorophyll special pair and subsequent electron acceptors. PSI consists of a core antenna complex that captures photons, and an electron transfer chain that converts photonic excitation into a charge separation. The eukaryotic PSI reaction center is composed of at least 11 subunits. It depends on P700 is a chlorophyll a/chlorophyll a' dimer, A0 is one or more chlorophyll a, A1 is one or both phylloquinones and FX is a shared 4Fe-4S iron-sulfur center. as a cofactor.

It localises to the plastid. The protein resides in the chloroplast thylakoid membrane. It catalyses the reaction reduced [plastocyanin] + hnu + oxidized [2Fe-2S]-[ferredoxin] = oxidized [plastocyanin] + reduced [2Fe-2S]-[ferredoxin]. In terms of biological role, psaA and PsaB bind P700, the primary electron donor of photosystem I (PSI), as well as the electron acceptors A0, A1 and FX. PSI is a plastocyanin-ferredoxin oxidoreductase, converting photonic excitation into a charge separation, which transfers an electron from the donor P700 chlorophyll pair to the spectroscopically characterized acceptors A0, A1, FX, FA and FB in turn. Oxidized P700 is reduced on the lumenal side of the thylakoid membrane by plastocyanin. The protein is Photosystem I P700 chlorophyll a apoprotein A2 of Helianthus annuus (Common sunflower).